The sequence spans 80 residues: Exodeoxyribonuclease 7 small subunit (80 aa).

It belongs to the XseB family. In terms of assembly, heterooligomer composed of large and small subunits.

It localises to the cytoplasm. The enzyme catalyses Exonucleolytic cleavage in either 5'- to 3'- or 3'- to 5'-direction to yield nucleoside 5'-phosphates.. In terms of biological role, bidirectionally degrades single-stranded DNA into large acid-insoluble oligonucleotides, which are then degraded further into small acid-soluble oligonucleotides. The chain is Exodeoxyribonuclease 7 small subunit from Pseudomonas fluorescens (strain Pf0-1).